Reading from the N-terminus, the 535-residue chain is Dimethylaniline monooxygenase [N-oxide-forming] 2 (535 aa).

FAD-binding positions include 9–13, Glu-32, 40–41, and 61–62; these read GAGVS, LW, and NT. Residues 60-61 and 195-198 contribute to the NADP(+) site; these read TN and SAAD. Residue Lys-492 forms a Glycyl lysine isopeptide (Lys-Gly) (interchain with G-Cter in SUMO) linkage. Residues 510 to 530 traverse the membrane as a helical segment; it reads APVSFLIKVLGLLAIVLAFFF.

It belongs to the FMO family. Requires FAD as cofactor. Mg(2+) is required as a cofactor.

Its subcellular location is the microsome membrane. The protein resides in the endoplasmic reticulum membrane. Catalyzes the oxidative metabolism of numerous xenobiotics, including mainly therapeutic drugs and insecticides that contain a soft nucleophile, most commonly nitrogen and sulfur and participates to their bioactivation. This Rattus norvegicus (Rat) protein is Dimethylaniline monooxygenase [N-oxide-forming] 2.